The following is a 377-amino-acid chain: Chaperone protein DnaJ (377 aa).

Positions 5-70 constitute a J domain; sequence DYYEILGVER…EKRAAYDQYG (66 aa). The CR-type zinc-finger motif lies at 134–212; it reads GITKDIQIQT…CHGDGRVHKT (79 aa). Zn(2+) contacts are provided by Cys147, Cys150, Cys164, Cys167, Cys186, Cys189, Cys200, and Cys203. 4 CXXCXGXG motif repeats span residues 147 to 154, 164 to 171, 186 to 193, and 200 to 207; these read CDHCNGSG, CPTCHGHG, CPHCHGTG, and CKKCHGDG.

This sequence belongs to the DnaJ family. Homodimer. Zn(2+) is required as a cofactor.

The protein resides in the cytoplasm. Participates actively in the response to hyperosmotic and heat shock by preventing the aggregation of stress-denatured proteins and by disaggregating proteins, also in an autonomous, DnaK-independent fashion. Unfolded proteins bind initially to DnaJ; upon interaction with the DnaJ-bound protein, DnaK hydrolyzes its bound ATP, resulting in the formation of a stable complex. GrpE releases ADP from DnaK; ATP binding to DnaK triggers the release of the substrate protein, thus completing the reaction cycle. Several rounds of ATP-dependent interactions between DnaJ, DnaK and GrpE are required for fully efficient folding. Also involved, together with DnaK and GrpE, in the DNA replication of plasmids through activation of initiation proteins. The polypeptide is Chaperone protein DnaJ (Actinobacillus succinogenes (strain ATCC 55618 / DSM 22257 / CCUG 43843 / 130Z)).